A 137-amino-acid chain; its full sequence is ATP synthase epsilon chain, chloroplastic (137 aa).

It belongs to the ATPase epsilon chain family. As to quaternary structure, F-type ATPases have 2 components, CF(1) - the catalytic core - and CF(0) - the membrane proton channel. CF(1) has five subunits: alpha(3), beta(3), gamma(1), delta(1), epsilon(1). CF(0) has three main subunits: a, b and c.

The protein resides in the plastid. It is found in the chloroplast thylakoid membrane. In terms of biological role, produces ATP from ADP in the presence of a proton gradient across the membrane. The chain is ATP synthase epsilon chain, chloroplastic from Pinus koraiensis (Korean pine).